We begin with the raw amino-acid sequence, 590 residues long: Negative elongation factor C/D (590 aa).

Positions 16–43 are disordered; it reads GSAAEWGDEADGGQQEDDSGEGEDDAEV. Residues 21 to 43 show a composition bias toward acidic residues; it reads WGDEADGGQQEDDSGEGEDDAEV.

It belongs to the NELF-D family. In terms of assembly, the NELF complex is composed of NELFA, NELFB, NELFCD (isoform NELF-C or isoform NELF-D) and NELFE; NELFA and NELFCD form a stable subcomplex that binds primarily through NELFCD to the N-terminus of NELFB. Binds RNA which may help to stabilize the NELF complex on nucleic acid. In vitro, the NELFA:NELFCD subcomplex binds to ssDNA and ssRNA in a sequence- and structure-dependent manner. Interacts with ARAF. Interacts with PCF11. Interacts with KAT8. As to expression, widely expressed. Expressed in heart, brain, lung, placenta, liver, skeletal and cardiac muscle, adrenal, thyroid, kidney and pancreas.

Its subcellular location is the nucleus. Essential component of the NELF complex, a complex that negatively regulates the elongation of transcription by RNA polymerase II. The NELF complex, which acts via an association with the DSIF complex and causes transcriptional pausing, is counteracted by the P-TEFb kinase complex. Its function is as follows. (Microbial infection) The NELF complex is involved in HIV-1 latency possibly involving recruitment of PCF11 to paused RNA polymerase II. The protein is Negative elongation factor C/D (NELFCD) of Homo sapiens (Human).